Consider the following 342-residue polypeptide: Biotin synthase (342 aa).

Residues 63 to 288 (PEVEVEGIIS…RTMLRFAGGR (226 aa)) enclose the Radical SAM core domain. Residues Cys-78, Cys-82, and Cys-85 each contribute to the [4Fe-4S] cluster site. [2Fe-2S] cluster contacts are provided by Cys-121, Cys-154, Cys-213, and Arg-283.

It belongs to the radical SAM superfamily. Biotin synthase family. In terms of assembly, homodimer. It depends on [4Fe-4S] cluster as a cofactor. [2Fe-2S] cluster is required as a cofactor.

The catalysed reaction is (4R,5S)-dethiobiotin + (sulfur carrier)-SH + 2 reduced [2Fe-2S]-[ferredoxin] + 2 S-adenosyl-L-methionine = (sulfur carrier)-H + biotin + 2 5'-deoxyadenosine + 2 L-methionine + 2 oxidized [2Fe-2S]-[ferredoxin]. The protein operates within cofactor biosynthesis; biotin biosynthesis; biotin from 7,8-diaminononanoate: step 2/2. Catalyzes the conversion of dethiobiotin (DTB) to biotin by the insertion of a sulfur atom into dethiobiotin via a radical-based mechanism. This Mycobacteroides abscessus (strain ATCC 19977 / DSM 44196 / CCUG 20993 / CIP 104536 / JCM 13569 / NCTC 13031 / TMC 1543 / L948) (Mycobacterium abscessus) protein is Biotin synthase.